A 1401-amino-acid polypeptide reads, in one-letter code: DNA-directed RNA polymerase subunit beta' (1401 aa).

4 residues coordinate Zn(2+): cysteine 70, cysteine 72, cysteine 85, and cysteine 88. Positions 460, 462, and 464 each coordinate Mg(2+). Residues cysteine 808, cysteine 882, cysteine 889, and cysteine 892 each contribute to the Zn(2+) site.

It belongs to the RNA polymerase beta' chain family. In terms of assembly, the RNAP catalytic core consists of 2 alpha, 1 beta, 1 beta' and 1 omega subunit. When a sigma factor is associated with the core the holoenzyme is formed, which can initiate transcription. Requires Mg(2+) as cofactor. Zn(2+) serves as cofactor.

It catalyses the reaction RNA(n) + a ribonucleoside 5'-triphosphate = RNA(n+1) + diphosphate. DNA-dependent RNA polymerase catalyzes the transcription of DNA into RNA using the four ribonucleoside triphosphates as substrates. This chain is DNA-directed RNA polymerase subunit beta', found in Legionella pneumophila subsp. pneumophila (strain Philadelphia 1 / ATCC 33152 / DSM 7513).